Consider the following 356-residue polypeptide: Probable methyltransferase-like protein 15 homolog (356 aa).

S-adenosyl-L-methionine is bound by residues 55 to 57 (GGH), aspartate 74, phenylalanine 103, aspartate 126, and glutamine 133.

It belongs to the methyltransferase superfamily. RsmH family.

Its function is as follows. Probable S-adenosyl-L-methionine-dependent methyltransferase. The polypeptide is Probable methyltransferase-like protein 15 homolog (Drosophila melanogaster (Fruit fly)).